A 279-amino-acid polypeptide reads, in one-letter code: Proteasome subunit beta 2 (279 aa).

The propeptide at 1–53 is removed in mature form; by autocatalysis; it reads MAAAFDPSGRFPDLFTSVGTSSFSAFLSKAAPELLPGRRPLPPGMATGLTPHA. The active-site Nucleophile is Thr-54.

Belongs to the peptidase T1B family. As to quaternary structure, the 20S proteasome core is composed of 14 alpha and 14 beta subunits that assemble into four stacked heptameric rings, resulting in a barrel-shaped structure. The two inner rings, each composed of seven catalytic beta subunits, are sandwiched by two outer rings, each composed of seven alpha subunits. The catalytic chamber with the active sites is on the inside of the barrel. Has a gated structure, the ends of the cylinder being occluded by the N-termini of the alpha-subunits. Is capped by the proteasome-associated ATPase, ARC.

Its subcellular location is the cytoplasm. The catalysed reaction is Cleavage of peptide bonds with very broad specificity.. It functions in the pathway protein degradation; proteasomal Pup-dependent pathway. Its activity is regulated as follows. The formation of the proteasomal ATPase ARC-20S proteasome complex, likely via the docking of the C-termini of ARC into the intersubunit pockets in the alpha-rings, may trigger opening of the gate for substrate entry. Interconversion between the open-gate and close-gate conformations leads to a dynamic regulation of the 20S proteasome proteolysis activity. Its function is as follows. Component of the proteasome core, a large protease complex with broad specificity involved in protein degradation. This is Proteasome subunit beta 2 from Salinispora tropica (strain ATCC BAA-916 / DSM 44818 / JCM 13857 / NBRC 105044 / CNB-440).